The chain runs to 527 residues: Amine oxidase [flavin-containing] A (527 aa).

Methionine 1 carries the post-translational modification N-acetylmethionine. Residues 1–497 lie on the Cytoplasmic side of the membrane; sequence MASREKTSIE…HTFWERNLPS (497 aa). Residue serine 383 is modified to Phosphoserine. Cysteine 406 bears the S-8alpha-FAD cysteine mark. A helical; Anchor for type IV membrane protein membrane pass occupies residues 498 to 518; it reads VTGLLKLIGFTTSVTALWIVA. At 519-527 the chain is on the mitochondrial intermembrane side; it reads YKFRLLRRS. The segment at 520 to 522 is interaction with membrane phospholipid headgroups; sequence KFR.

Belongs to the flavin monoamine oxidase family. Monomer, homo- or heterodimer (containing two subunits of similar size). Each subunit contains a covalently bound flavin. Enzymatically active as monomer. FAD is required as a cofactor.

The protein resides in the mitochondrion outer membrane. It carries out the reaction a secondary aliphatic amine + O2 + H2O = a primary amine + an aldehyde + H2O2. It catalyses the reaction a primary methyl amine + O2 + H2O = an aldehyde + H2O2 + NH4(+). The enzyme catalyses (R)-adrenaline + O2 + H2O = (R)-3,4-dihydroxymandelaldehyde + methylamine + H2O2. The catalysed reaction is dopamine + O2 + H2O = 3,4-dihydroxyphenylacetaldehyde + H2O2 + NH4(+). It carries out the reaction tyramine + O2 + H2O = (4-hydroxyphenyl)acetaldehyde + H2O2 + NH4(+). It catalyses the reaction (R)-noradrenaline + O2 + H2O = (R)-3,4-dihydroxymandelaldehyde + H2O2 + NH4(+). The enzyme catalyses serotonin + O2 + H2O = (5-hydroxyindol-3-yl)acetaldehyde + H2O2 + NH4(+). The catalysed reaction is kynuramine + O2 + H2O = 3-(2-aminophenyl)-3-oxopropanal + H2O2 + NH4(+). It carries out the reaction tryptamine + O2 + H2O = indole-3-acetaldehyde + H2O2 + NH4(+). It catalyses the reaction 2-phenylethylamine + O2 + H2O = 2-phenylacetaldehyde + H2O2 + NH4(+). Catalyzes the oxidative deamination of primary and some secondary amine such as neurotransmitters, with concomitant reduction of oxygen to hydrogen peroxide and has important functions in the metabolism of neuroactive and vasoactive amines in the central nervous system and peripheral tissues. Preferentially oxidizes serotonin. Also catalyzes the oxidative deamination of kynuramine to 3-(2-aminophenyl)-3-oxopropanal that can spontaneously condense to 4-hydroxyquinoline. This is Amine oxidase [flavin-containing] A from Canis lupus familiaris (Dog).